The chain runs to 482 residues: MVESQKAMPQPKMGRIHRIHFVGIGGVGMCGIAEVLLNLGYEVSGSDLKVSPVTQRLESFGAEIFVGHRAENAAHADVLVVSSAINPANPEVATALERRIPVVPRAEMLAELMRYRHGVAVAGTHGKTTTTSLLASVFAAGGLDPTFVIGGRLTAAGTNAQLGTSRYLIAEADESDASFLHLQPMVAVVTNIDADHMATYEGDFNKLKKTFVEFLHNLPFYGLAVMCLDDPVVREILPQVKRPTVTYGFCEEADIRAINVSQKGMQTHFTVLRRDREPLEVSVNMPGNHNVLNALATIAIATDEGISDEAIVQGLSGFQGVGRRFQVYGELPVEGGSVMLVDDYGHHPTEVAAVIKAVRGGWPSRRLVIVYQPHRYSRTRDLYDDFVQVLGDANVLLLMEVYPAGEEPIPGADSRQLCHSIRQRGKLDPIYIERGAELAPLVKPLLRAGDILLCQGAGDVGGLAPQLMKSPLFAGAKQEKSK.

Residue 123–129 coordinates ATP; sequence GTHGKTT.

It belongs to the MurCDEF family.

It is found in the cytoplasm. It catalyses the reaction UDP-N-acetyl-alpha-D-muramate + L-alanine + ATP = UDP-N-acetyl-alpha-D-muramoyl-L-alanine + ADP + phosphate + H(+). It functions in the pathway cell wall biogenesis; peptidoglycan biosynthesis. Functionally, cell wall formation. The chain is UDP-N-acetylmuramate--L-alanine ligase from Pseudomonas putida (strain W619).